The sequence spans 238 residues: ATP synthase subunit a (238 aa).

5 consecutive transmembrane segments (helical) span residues L16–F36, G79–V99, F103–L123, G129–V149, and V209–L229.

It belongs to the ATPase A chain family. In terms of assembly, F-type ATPases have 2 components, CF(1) - the catalytic core - and CF(0) - the membrane proton channel. CF(1) has five subunits: alpha(3), beta(3), gamma(1), delta(1), epsilon(1). CF(0) has three main subunits: a, b and c.

Its subcellular location is the mitochondrion inner membrane. Functionally, mitochondrial membrane ATP synthase (F(1)F(0) ATP synthase or Complex V) produces ATP from ADP in the presence of a proton gradient across the membrane which is generated by electron transport complexes of the respiratory chain. F-type ATPases consist of two structural domains, F(1) - containing the extramembraneous catalytic core and F(0) - containing the membrane proton channel, linked together by a central stalk and a peripheral stalk. During catalysis, ATP synthesis in the catalytic domain of F(1) is coupled via a rotary mechanism of the central stalk subunits to proton translocation. Key component of the proton channel; it may play a direct role in the translocation of protons across the membrane. The polypeptide is ATP synthase subunit a (ATP6) (Mytilus edulis (Blue mussel)).